Here is a 482-residue protein sequence, read N- to C-terminus: MPRFIDRVVVHARAGNGGNGCASVHREKFKPLGGPDGGNGGRGGSVVFVVDPQVHTLLDFHFHPHVVAPSGKQGAGSNRDGAAGADLEVKVPDGTVVLDERGQILADLIGAGTRFEAAAGGRGGLGNAALASRARKAPGFALLGEQGEVRELTLELKTVADVGLVGFPSAGKSSLVSTISAAKPKIADYPFTTLAPNLGVVSAGEHTFTVADVPGLIPGASEGRGLGLDFLRHIERCAVLVHVVDCATLEPGRDPISDIEALEAEIAAYTPTLQGDSTLGDLAERPRAVVLNKIDVPEARELADFVREDVETRFGWPVFEISTVAREGLRPLIFALWDMVAAYRAAQPAAVPRRPVIRPIPVDETAFSVVPDGQGGFVVKGTRPQRWVAQTNFDNDEAVGYLGDRLARLGVEDELLKLGARPGCAVTIGDMTFDWEPQTPAGVDVHLSGRGTDVRLEQTDRVGADERKAARKARRQSDDGEE.

The region spanning 2–159 is the Obg domain; that stretch reads PRFIDRVVVH…RELTLELKTV (158 aa). The region spanning 160–341 is the OBG-type G domain; the sequence is ADVGLVGFPS…LIFALWDMVA (182 aa). Residues 166–173, 191–195, 212–215, 292–295, and 322–324 each bind GTP; these read GFPSAGKS, FTTLA, DVPG, NKID, and STV. Mg(2+) contacts are provided by Ser173 and Thr193. The 79-residue stretch at 359–437 folds into the OCT domain; that stretch reads PIPVDETAFS…IGDMTFDWEP (79 aa). Positions 450 to 482 are disordered; that stretch reads RGTDVRLEQTDRVGADERKAARKARRQSDDGEE. Positions 452 to 468 are enriched in basic and acidic residues; it reads TDVRLEQTDRVGADERK.

This sequence belongs to the TRAFAC class OBG-HflX-like GTPase superfamily. OBG GTPase family. Monomer. Requires Mg(2+) as cofactor.

It is found in the cytoplasm. An essential GTPase which binds GTP, GDP and possibly (p)ppGpp with moderate affinity, with high nucleotide exchange rates and a fairly low GTP hydrolysis rate. Plays a role in control of the cell cycle, stress response, ribosome biogenesis and in those bacteria that undergo differentiation, in morphogenesis control. This Mycolicibacterium gilvum (strain PYR-GCK) (Mycobacterium gilvum (strain PYR-GCK)) protein is GTPase Obg.